The following is a 495-amino-acid chain: GTPase Der (495 aa).

2 EngA-type G domains span residues 3–166 and 208–381; these read PVVA…VQDE and IKLA…ACAT. GTP is bound by residues 9–16, 56–60, 118–121, 214–221, 261–265, and 326–329; these read GRPNVGKS, DTGGI, NKTD, DTAGV, and NKWD. The KH-like domain occupies 382–466; the sequence is RRVSTAMLTR…PIRIQFKEGE (85 aa).

Belongs to the TRAFAC class TrmE-Era-EngA-EngB-Septin-like GTPase superfamily. EngA (Der) GTPase family. As to quaternary structure, associates with the 50S ribosomal subunit.

Its function is as follows. GTPase that plays an essential role in the late steps of ribosome biogenesis. This chain is GTPase Der, found in Pectobacterium carotovorum subsp. carotovorum (strain PC1).